A 178-amino-acid polypeptide reads, in one-letter code: Protein 105R (178 aa).

The first 18 residues, 1 to 18 (MYFLFFFLLFLFPVGVKG), serve as a signal peptide directing secretion.

The sequence is that of Protein 105R from Pantherophis guttatus (Corn snake).